Reading from the N-terminus, the 906-residue chain is DNA gyrase subunit A (906 aa).

The Topo IIA-type catalytic domain maps to 35 to 524; it reads IPDVRDGLKP…GEFDQDIEDL (490 aa). Tyr123 functions as the O-(5'-phospho-DNA)-tyrosine intermediate in the catalytic mechanism. Residues 551–557 carry the GyrA-box motif; it reads QKRGGKG. Positions 886–906 are disordered; the sequence is SESEEDSELEEDLEQAEEVYT.

This sequence belongs to the type II topoisomerase GyrA/ParC subunit family. Heterotetramer, composed of two GyrA and two GyrB chains. In the heterotetramer, GyrA contains the active site tyrosine that forms a transient covalent intermediate with DNA, while GyrB binds cofactors and catalyzes ATP hydrolysis.

It is found in the cytoplasm. It catalyses the reaction ATP-dependent breakage, passage and rejoining of double-stranded DNA.. A type II topoisomerase that negatively supercoils closed circular double-stranded (ds) DNA in an ATP-dependent manner to modulate DNA topology and maintain chromosomes in an underwound state. Negative supercoiling favors strand separation, and DNA replication, transcription, recombination and repair, all of which involve strand separation. Also able to catalyze the interconversion of other topological isomers of dsDNA rings, including catenanes and knotted rings. Type II topoisomerases break and join 2 DNA strands simultaneously in an ATP-dependent manner. This Rickettsia felis (strain ATCC VR-1525 / URRWXCal2) (Rickettsia azadi) protein is DNA gyrase subunit A.